A 27-amino-acid chain; its full sequence is thr operon leader peptide (27 aa).

This sequence belongs to the thr operon leader peptide family.

This protein is involved in control of the biosynthesis of threonine. The chain is thr operon leader peptide from Escherichia coli O157:H7.